The following is a 636-amino-acid chain: Phosphomethylpyrimidine synthase (636 aa).

Positions Asp48–Pro70 are disordered. Substrate-binding positions include Asn231, Met260, Tyr289, His325, Ser345 to Gly347, Asp386 to Arg389, and Glu425. His429 provides a ligand contact to Zn(2+). Substrate is bound at residue Tyr452. His493 contacts Zn(2+). [4Fe-4S] cluster is bound by residues Cys573, Cys576, and Cys581.

This sequence belongs to the ThiC family. Homodimer. [4Fe-4S] cluster is required as a cofactor.

It carries out the reaction 5-amino-1-(5-phospho-beta-D-ribosyl)imidazole + S-adenosyl-L-methionine = 4-amino-2-methyl-5-(phosphooxymethyl)pyrimidine + CO + 5'-deoxyadenosine + formate + L-methionine + 3 H(+). It functions in the pathway cofactor biosynthesis; thiamine diphosphate biosynthesis. Functionally, catalyzes the synthesis of the hydroxymethylpyrimidine phosphate (HMP-P) moiety of thiamine from aminoimidazole ribotide (AIR) in a radical S-adenosyl-L-methionine (SAM)-dependent reaction. In Cellvibrio japonicus (strain Ueda107) (Pseudomonas fluorescens subsp. cellulosa), this protein is Phosphomethylpyrimidine synthase.